We begin with the raw amino-acid sequence, 172 residues long: Small ribosomal subunit protein uS13c (172 aa).

Residues 1–47 (MAHTLATPVAPSVSLICNTKLSVSLSSSSLAFRPVNPKNGGGLSIKC) constitute a chloroplast transit peptide.

In terms of assembly, component of the chloroplast small ribosomal subunit (SSU). Mature 70S chloroplast ribosomes of higher plants consist of a small (30S) and a large (50S) subunit. The 30S small subunit contains 1 molecule of ribosomal RNA (16S rRNA) and 24 different proteins. The 50S large subunit contains 3 rRNA molecules (23S, 5S and 4.5S rRNA) and 33 different proteins. uS13c interacts with translation factor pY (PSRP1).

Its subcellular location is the plastid. It is found in the chloroplast. Functionally, component of the chloroplast ribosome (chloro-ribosome), a dedicated translation machinery responsible for the synthesis of chloroplast genome-encoded proteins, including proteins of the transcription and translation machinery and components of the photosynthetic apparatus. The protein is Small ribosomal subunit protein uS13c (RPS13) of Spinacia oleracea (Spinach).